We begin with the raw amino-acid sequence, 146 residues long: Monothiol glutaredoxin-5, mitochondrial (146 aa).

The Glutaredoxin domain maps to 26-131 (RQALEQAVKE…KILKEINALA (106 aa)). Lys43 is a binding site for glutathione. Position 51 (Cys51) interacts with [2Fe-2S] cluster. Glutathione-binding positions include 83–87 (REGIK), Ile95, and 108–109 (SD).

The protein belongs to the glutaredoxin family. Monothiol subfamily. In terms of assembly, homodimer. Interacts with ISA1 and ISA2.

Its subcellular location is the mitochondrion. Its function is as follows. Monothiol glutaredoxin involved in mitochondrial iron-sulfur (Fe/S) cluster transfer. Receives 2Fe/2S clusters from scaffold protein isu1 and mediates their transfer to apoproteins, to the 4Fe/FS cluster biosynthesis machinery, or export from mitochondrion. In Schizosaccharomyces pombe (strain 972 / ATCC 24843) (Fission yeast), this protein is Monothiol glutaredoxin-5, mitochondrial.